Here is a 364-residue protein sequence, read N- to C-terminus: UDP-N-acetylglucosamine--N-acetylmuramyl-(pentapeptide) pyrophosphoryl-undecaprenol N-acetylglucosamine transferase (364 aa).

UDP-N-acetyl-alpha-D-glucosamine is bound by residues 10 to 12, Asn-124, Arg-161, Ser-195, and Gln-291; that span reads TAG.

It belongs to the glycosyltransferase 28 family. MurG subfamily.

It is found in the cell membrane. The enzyme catalyses di-trans,octa-cis-undecaprenyl diphospho-N-acetyl-alpha-D-muramoyl-L-alanyl-D-glutamyl-meso-2,6-diaminopimeloyl-D-alanyl-D-alanine + UDP-N-acetyl-alpha-D-glucosamine = di-trans,octa-cis-undecaprenyl diphospho-[N-acetyl-alpha-D-glucosaminyl-(1-&gt;4)]-N-acetyl-alpha-D-muramoyl-L-alanyl-D-glutamyl-meso-2,6-diaminopimeloyl-D-alanyl-D-alanine + UDP + H(+). It participates in cell wall biogenesis; peptidoglycan biosynthesis. Cell wall formation. Catalyzes the transfer of a GlcNAc subunit on undecaprenyl-pyrophosphoryl-MurNAc-pentapeptide (lipid intermediate I) to form undecaprenyl-pyrophosphoryl-MurNAc-(pentapeptide)GlcNAc (lipid intermediate II). The polypeptide is UDP-N-acetylglucosamine--N-acetylmuramyl-(pentapeptide) pyrophosphoryl-undecaprenol N-acetylglucosamine transferase (Streptomyces coelicolor (strain ATCC BAA-471 / A3(2) / M145)).